The following is an 892-amino-acid chain: Integrator complex subunit 6 (892 aa).

A VWFA domain is found at 3–227; the sequence is ILLFLIDTSA…QCLESLVQKV (225 aa). The Inhibitory loop motif lies at 630 to 637; that stretch reads MMIDEADE. Disordered stretches follow at residues 665–692, 711–754, and 771–793; these read MSPLLRRPQTPPIITNHVLGKGPTGTQG, VGGT…AAPD, and PDHTQNCEELSPPGQEGEMEVNE.

It belongs to the Integrator subunit 6 family. Component of the Integrator complex, composed of core subunits INTS1, INTS2, INTS3, INTS4, INTS5, INTS6, INTS7, INTS8, INTS9/RC74, INTS10, INTS11/CPSF3L, INTS12, INTS13, INTS14 and INTS15. The core complex associates with protein phosphatase 2A subunits PPP2CA and PPP2R1A, to form the Integrator-PP2A (INTAC) complex.

Its subcellular location is the nucleus. The protein resides in the chromosome. Component of the integrator complex, a multiprotein complex that terminates RNA polymerase II (Pol II) transcription in the promoter-proximal region of genes. The integrator complex provides a quality checkpoint during transcription elongation by driving premature transcription termination of transcripts that are unfavorably configured for transcriptional elongation: the complex terminates transcription by (1) catalyzing dephosphorylation of the C-terminal domain (CTD) of Pol II subunit POLR2A/RPB1 and SUPT5H/SPT5, (2) degrading the exiting nascent RNA transcript via endonuclease activity and (3) promoting the release of Pol II from bound DNA. The integrator complex is also involved in terminating the synthesis of non-coding Pol II transcripts, such as enhancer RNAs (eRNAs), small nuclear RNAs (snRNAs), telomerase RNAs and long non-coding RNAs (lncRNAs). Within the integrator complex, INTS6 acts as a molecular adapter that promotes assembly of protein phosphatase 2A (PP2A) subunits to the integrator core complex, promoting recruitment of PP2A to transcription pause-release checkpoint. The sequence is that of Integrator complex subunit 6 (ints6l) from Danio rerio (Zebrafish).